The chain runs to 548 residues: MGTLTSVAFAAAVNIRFRSFHRENIKTTITTLPKWQKRLCFSSTEDSHRFRIAKCLGNDENSNRDDSIGENGETHKSSVVKTATFEEEDEETSKSSSTTSSSNEFGSDKTSMPSTIDPTYSSFQIDSFKLMELLGPEKVDPADVKLIKDKLFGYSTFWVTKEEPFGDLGEGILFLGNLRGKKEDVFAKLQRKLVEVASDKYNLFMIEEPNSEGPDPRGGARVSFGLLRKEVSEPGPTTLWQYVIALILFLLTIGSSVELGIASQINRLPPEVVKYFTDPNAVEPPDMELLYPFVDAALPLAYGVLGILLFHELGHFLAAVPKKVKLSIPYFIPNITLGSFGAITQFKSILPDRSTKVDISLAGPFAGAALSVSMFAVGLFLSTEPDAANDLVQVPSMLFQGSLLLGLISRATLGYAALHAATVSIHPLVIAGWCGLTTTAFNMLPVGCLDGGRAVQGAFGKNALVTFGLSTYVMLGLRVLGGPLALPWGLYVLICQRTPEKPCLNDVTEVGTWRKALVGIALILVVLTLLPVWDELAEEVGIGLVTTF.

The transit peptide at 1 to 18 directs the protein to the chloroplast; the sequence is MGTLTSVAFAAAVNIRFR. Positions 61 to 76 are enriched in basic and acidic residues; that stretch reads NSNRDDSIGENGETHK. The interval 61–116 is disordered; the sequence is NSNRDDSIGENGETHKSSVVKTATFEEEDEETSKSSSTTSSSNEFGSDKTSMPSTI. The segment covering 103–116 has biased composition (polar residues); it reads NEFGSDKTSMPSTI. 8 consecutive transmembrane segments (helical) span residues 242-262, 290-310, 326-346, 361-381, 388-408, 416-436, 474-494, and 516-536; these read YVIA…LGIA, LYPF…ILLF, LSIP…ITQF, LAGP…GLFL, ANDL…LGLI, AALH…WCGL, MLGL…YVLI, and ALVG…WDEL.

Belongs to the peptidase M50B family. Expressed in roots, leaves, cotyledons, hypocotyls, stems, flowers and siliques.

The protein localises to the plastid. The protein resides in the chloroplast membrane. Membrane-associated and ATP-independent metalloprotease required for development of both thylakoid grana and well-organized lamellae in chloroplast. Required for the accumulation of chlorophyll and chlorophyll a/b binding (CAB) proteins (from both PS I and PS II) in chloroplast membranes, and for grana formation and normal chloroplast development. Involved in the regulation of nuclear gene expression in response to ammonium stress and interacts with ABA signaling. Carries out beta-casein degradation in an ATP-independent manner in vitro. The polypeptide is Probable zinc metalloprotease EGY1, chloroplastic (EGY1) (Arabidopsis thaliana (Mouse-ear cress)).